Reading from the N-terminus, the 1090-residue chain is Exocyst complex component SEC5A (1090 aa).

Residues 18–128 (LKEQAKRDLT…ARKEDDGAWD (111 aa)) are disordered. The segment covering 45–69 (QQPRQQKPVAAAAAPPKKSAAAVRK) has biased composition (low complexity). Positions 109–124 (RGSDVREKGRARKEDD) are enriched in basic and acidic residues. Ser180 is subject to Phosphoserine. 3 disordered regions span residues 759 to 783 (TSRQ…NTYG), 987 to 1010 (VETP…DKQS), and 1046 to 1090 (APLE…PRRR). Over residues 998–1009 (RGSEDTVSDDKQ) the composition is skewed to basic and acidic residues. A compositionally biased stretch (polar residues) spans 1058–1082 (TYSSFRGSMDSPSRNYRGSQSSGSP).

Belongs to the SEC5 family. The exocyst complex is composed of SEC3, SEC5, SEC6, SEC8, SEC10, EXO70A1 and EXO84B. Interacts with SEC3A and EXO70B1. Binds to EXO70H1 and EXO70B2. Binds directly to B1L.

The protein localises to the cytoplasm. It is found in the cytosol. Its subcellular location is the secreted. The protein resides in the extracellular exosome. Functionally, component of the exocyst complex involved in the docking of exocytic vesicles with fusion sites on the plasma membrane during regulated or polarized secretion. Involved in polarized cell growth and organ morphogenesis. During cytokinesis, involved in cell plate initiation, cell plate maturation and formation of new primary cell wall. Probable component of an exocyst subcomplex specifically involved in autophagy-related, Golgi-independent membrane traffic to the vacuole. Regulates autophagosome formation and autophagy-related Golgi-independent import into the vacuole. This is Exocyst complex component SEC5A from Arabidopsis thaliana (Mouse-ear cress).